A 299-amino-acid polypeptide reads, in one-letter code: Beta-lactamase VEB-1 (299 aa).

A signal peptide spans 1-23 (MKIVKRILLVLLSLFFTIVYSNA). Ser68 (nucleophile; acyl-ester intermediate) is an active-site residue. A beta-lactam-binding residues include Lys71, Ser131, and Glu167. The Proton acceptor role is filled by Glu167.

Belongs to the class-A beta-lactamase family.

It carries out the reaction a beta-lactam + H2O = a substituted beta-amino acid. Its activity is regulated as follows. Inhibited by the beta-lactamase-blocking agent clavulanic acid. In terms of biological role, class A beta-lactamase which confers resistance to the beta-lactam antibiotics, including penicillins and cephalosporins, in E.coli strain JM109. Acts via hydrolysis of the beta-lactam ring. Has penicillin-, and cephalosporin-hydrolyzing activities. This Pseudomonas aeruginosa protein is Beta-lactamase VEB-1.